Reading from the N-terminus, the 305-residue chain is Ribosomal RNA small subunit methyltransferase H (305 aa).

S-adenosyl-L-methionine-binding positions include 33–35, D51, F82, D96, and Q103; that span reads GGY.

Belongs to the methyltransferase superfamily. RsmH family.

The protein localises to the cytoplasm. It catalyses the reaction cytidine(1402) in 16S rRNA + S-adenosyl-L-methionine = N(4)-methylcytidine(1402) in 16S rRNA + S-adenosyl-L-homocysteine + H(+). Functionally, specifically methylates the N4 position of cytidine in position 1402 (C1402) of 16S rRNA. The protein is Ribosomal RNA small subunit methyltransferase H of Rickettsia bellii (strain OSU 85-389).